Consider the following 498-residue polypeptide: Probable cytosol aminopeptidase (498 aa).

Residues K264 and D269 each coordinate Mn(2+). Residue K276 is part of the active site. Residues D287, D346, and E348 each coordinate Mn(2+). R350 is a catalytic residue.

It belongs to the peptidase M17 family. Mn(2+) serves as cofactor.

Its subcellular location is the cytoplasm. It catalyses the reaction Release of an N-terminal amino acid, Xaa-|-Yaa-, in which Xaa is preferably Leu, but may be other amino acids including Pro although not Arg or Lys, and Yaa may be Pro. Amino acid amides and methyl esters are also readily hydrolyzed, but rates on arylamides are exceedingly low.. The enzyme catalyses Release of an N-terminal amino acid, preferentially leucine, but not glutamic or aspartic acids.. Its function is as follows. Presumably involved in the processing and regular turnover of intracellular proteins. Catalyzes the removal of unsubstituted N-terminal amino acids from various peptides. The protein is Probable cytosol aminopeptidase of Xanthobacter autotrophicus (strain ATCC BAA-1158 / Py2).